The following is a 212-amino-acid chain: Bcl-2-related ovarian killer protein (212 aa).

S7 is modified (phosphoserine). Residues 15–45 (MDAFDRSPTDKELVAQAKALGREYVHARLLR) are interactions with ITPR1. Glycyl lysine isopeptide (Lys-Gly) (interchain with G-Cter in ubiquitin) cross-links involve residues K25 and K32. Positions 32–44 (KALGREYVHARLL) match the BH4 motif. The short motif at 66–82 (VCAVLLRLGDELEMIRP) is the BH3 element. The tract at residues 70–78 (LLRLGDELE) is nuclear export signal. The BH1 motif lies at 112–131 (HIFSAGITWGKVVSLYAVAA). Glycyl lysine isopeptide (Lys-Gly) (interchain with G-Cter in ubiquitin) cross-links involve residues K159 and K176. The BH2 motif lies at 164 to 178 (WLRRRGGWTDVLKCV). The helical transmembrane segment at 189–209 (WLVAALCSFGRFLKAAFFVLL) threads the bilayer.

This sequence belongs to the Bcl-2 family. As to quaternary structure, monomer; positively regulates apoptotic process. Homodimer. Heterodimer. Oligomer; promoted by apoptotic stimuli and BH3-only proteins; mediates constitutive activation. Interacts (via BH4 domain) with ITPR1; enhances BOK expression and stabilization; limits apoptosis and prevents ubiquitination and then degradation; protects ITPR1 from proteolysis by CASP3 during apoptosis. Interacts with ITPR2 and ITPR3; binds most strongly to ITPR2, and barely to ITPR3; regulates their expression. Interacts with XPO1; translocates to the cytoplasm. Interacts with BNIP3; promotes oligomerization. Ubiquitinated by AMFR/gp78 E3 ubiquitin ligase complex; mediates degradation by ubiquitin-proteasome pathway in a VCP/p97-dependent manner; prevents from pro-apoptotic activity; promotes degradation of newly synthesized proteins that are not ITPR1 associated. Expressed mainly in oocytes; weak expression in granulosa cells of the developing follicles. In adult human ovaries, expressed in granulosa cells at all follicular stages, but expression in primordial/primary follicles granulosa cell is stronger than in secondary and antral follicles.

The protein localises to the mitochondrion membrane. It localises to the endoplasmic reticulum membrane. The protein resides in the mitochondrion inner membrane. It is found in the cytoplasm. Its subcellular location is the nucleus. The protein localises to the mitochondrion. It localises to the endoplasmic reticulum. The protein resides in the mitochondrion outer membrane. It is found in the early endosome membrane. Its subcellular location is the recycling endosome membrane. The protein localises to the nucleus outer membrane. It localises to the golgi apparatus. The protein resides in the cis-Golgi network membrane. It is found in the trans-Golgi network membrane. Its subcellular location is the membrane. In terms of biological role, apoptosis regulator that functions through different apoptotic signaling pathways. Plays a roles as pro-apoptotic protein that positively regulates intrinsic apoptotic process in a BAX- and BAK1-dependent manner or in a BAX- and BAK1-independent manner. In response to endoplasmic reticulum stress promotes mitochondrial apoptosis through downstream BAX/BAK1 activation and positive regulation of PERK-mediated unfolded protein response. Activates apoptosis independently of heterodimerization with survival-promoting BCL2 and BCL2L1 through induction of mitochondrial outer membrane permeabilization, in a BAX- and BAK1-independent manner, in response to inhibition of ERAD-proteasome degradation system, resulting in cytochrome c release. In response to DNA damage, mediates intrinsic apoptotic process in a TP53-dependent manner. Plays a role in granulosa cell apoptosis by CASP3 activation. Plays a roles as anti-apoptotic protein during neuronal apoptotic process, by negatively regulating poly ADP-ribose polymerase-dependent cell death through regulation of neuronal calcium homeostasis and mitochondrial bioenergetics in response to NMDA excitation. In addition to its role in apoptosis, may regulate trophoblast cell proliferation during the early stages of placental development, by acting on G1/S transition through regulation of CCNE1 expression. May also play a role as an inducer of autophagy by disrupting interaction between MCL1 and BECN1. Its function is as follows. Pro-apoptotic molecule exerting its function through the mitochondrial pathway. The polypeptide is Bcl-2-related ovarian killer protein (Homo sapiens (Human)).